The chain runs to 134 residues: UPF0102 protein Rmet_3430 (134 aa).

This sequence belongs to the UPF0102 family.

This Cupriavidus metallidurans (strain ATCC 43123 / DSM 2839 / NBRC 102507 / CH34) (Ralstonia metallidurans) protein is UPF0102 protein Rmet_3430.